Reading from the N-terminus, the 445-residue chain is mRNA cleavage and polyadenylation factor CLP1 (445 aa).

ATP contacts are provided by residues Asp33, Lys72, and 133–138; that span reads QTGKTS.

It belongs to the Clp1 family. Clp1 subfamily. As to quaternary structure, component of the cleavage factor IA (CF IA) complex, which is a heterohexameric complex with 2:2:1:1 stoichiometry of RNA14, RNA15, PCF11 and CLP1. It contains 2 copies of an RNA14-RNA15 dimer and 1 copy of CLP1-PCF11. The complex interacts with the cleavage factor HRB1/CF IB to form the cleavage factor I (CF I) complex, and binds to RNA. Interacts directly with PCF11. Interacts with the CPF components CFT1, PTA1, PFS2, YSH1 and SSU72.

The protein resides in the nucleus. Functionally, component of the cleavage factor IA (CF IA) complex, which is involved in the endonucleolytic cleavage during polyadenylation-dependent pre-mRNA 3'-end formation. Associates with HRB1/CF IB to form the cleavage factor I (CF I) complex. CF I is required for correct positioning of a larger protein complex, the cleavage and polyadenylation factor (CPF) complex, which contains the catalytic subunits executing mRNA cleavage and polyadenylation. CLP1 mediates interactions between CF IA and CPF factors. CLP1 is also involved in maintaining the CF IA interaction with the C-terminal domain of RNA Pol II largest subunit via PCF11, which links pre-mRNA 3'-end processing to transcription termination. This Saccharomyces cerevisiae (strain YJM789) (Baker's yeast) protein is mRNA cleavage and polyadenylation factor CLP1.